The chain runs to 773 residues: 4'-phosphopantetheine phosphatase (773 aa).

Ala-2 carries the N-acetylalanine modification. A pantothenate kinase region spans residues 2 to 402 (AECGASGSGS…SPELGPAQRA (401 aa)). Ser-196 and Ser-199 together coordinate acetyl-CoA. A 3'-nitrotyrosine modification is found at Tyr-320. 2 positions are modified to phosphoserine: Ser-393 and Ser-404. Residues 403-773 (RSGTFDLLEM…VIFKYEVPAE (371 aa)) are 4'-phosphopantetheine phosphatase. Position 406 is a phosphothreonine (Thr-406). Mn(2+) is bound by residues Asp-623, Asn-624, and Asp-659. Positions 724–728 (EGMGR) match the Subfamily II EGMGR motif motif.

In the N-terminal section; belongs to the type II pantothenate kinase family. It in the C-terminal section; belongs to the damage-control phosphatase family. Phosphopantetheine phosphatase II subfamily. Homodimer. Interacts with PKM. It depends on Mn(2+) as a cofactor. Ni(2+) is required as a cofactor. Widely expressed with high expression in the muscle. Expressed in the retina and lens epithelium, mainly in ganglion cell layer, outer plexiform layer and retinal pigment layer (at protein level).

It is found in the cytoplasm. The enzyme catalyses (R)-4'-phosphopantetheine + H2O = (R)-pantetheine + phosphate. The catalysed reaction is (R)-4'-phosphopantetheine sulfonate + H2O = (R)-pantetheine sulfonate + phosphate. It catalyses the reaction (R)-4'-phospho-S-sulfopantetheine + H2O = (R)-S-sulfopantetheine + phosphate. With respect to regulation, activity is strongly promoted by Co(2+), Ni(2+), Mg(2+) and Mn(2+). Activity is inhibited by EDTA. Its function is as follows. Phosphatase which shows a preference for 4'-phosphopantetheine and its oxidatively damaged forms (sulfonate or S-sulfonate), providing strong indirect evidence that the phosphatase activity pre-empts damage in the coenzyme A (CoA) pathway. Hydrolyzing excess 4'-phosphopantetheine could constitute a directed overflow mechanism to prevent its oxidation to the S-sulfonate, sulfonate, or other forms. Hydrolyzing 4'-phosphopantetheine sulfonate or S-sulfonate would forestall their conversion to inactive forms of CoA and acyl carrier protein. May play a role in the physiological regulation of CoA intracellular levels. This chain is 4'-phosphopantetheine phosphatase, found in Homo sapiens (Human).